The following is a 200-amino-acid chain: Peroxiredoxin (200 aa).

The Thioredoxin domain maps to 6-166 (ARIGHLAPGF…ILRLVQAFQF (161 aa)). Cys52 functions as the Cysteine sulfenic acid (-SOH) intermediate in the catalytic mechanism.

The protein belongs to the peroxiredoxin family. AhpC/Prx1 subfamily. Homodimer; disulfide-linked, upon oxidation.

It carries out the reaction a hydroperoxide + [thioredoxin]-dithiol = an alcohol + [thioredoxin]-disulfide + H2O. In terms of biological role, thiol-specific peroxidase that catalyzes the reduction of hydrogen peroxide and organic hydroperoxides to water and alcohols, respectively. Plays a role in cell protection against oxidative stress by detoxifying peroxides and as sensor of hydrogen peroxide-mediated signaling events. This Oncorhynchus mykiss (Rainbow trout) protein is Peroxiredoxin.